The following is a 361-amino-acid chain: Queuine tRNA-ribosyltransferase (361 aa).

Asp-92 (proton acceptor) is an active-site residue. Substrate contacts are provided by residues Asp-92–Phe-96, Asp-146, Gln-189, and Gly-216. The interval Gly-247–Asp-253 is RNA binding. The active-site Nucleophile is the Asp-266. Positions Thr-271 to Arg-275 are RNA binding; important for wobble base 34 recognition. Zn(2+) contacts are provided by Cys-304, Cys-306, Cys-309, and His-335.

This sequence belongs to the queuine tRNA-ribosyltransferase family. In terms of assembly, homodimer. Within each dimer, one monomer is responsible for RNA recognition and catalysis, while the other monomer binds to the replacement base PreQ1. Requires Zn(2+) as cofactor.

It carries out the reaction 7-aminomethyl-7-carbaguanine + guanosine(34) in tRNA = 7-aminomethyl-7-carbaguanosine(34) in tRNA + guanine. It participates in tRNA modification; tRNA-queuosine biosynthesis. Catalyzes the base-exchange of a guanine (G) residue with the queuine precursor 7-aminomethyl-7-deazaguanine (PreQ1) at position 34 (anticodon wobble position) in tRNAs with GU(N) anticodons (tRNA-Asp, -Asn, -His and -Tyr). Catalysis occurs through a double-displacement mechanism. The nucleophile active site attacks the C1' of nucleotide 34 to detach the guanine base from the RNA, forming a covalent enzyme-RNA intermediate. The proton acceptor active site deprotonates the incoming PreQ1, allowing a nucleophilic attack on the C1' of the ribose to form the product. After dissociation, two additional enzymatic reactions on the tRNA convert PreQ1 to queuine (Q), resulting in the hypermodified nucleoside queuosine (7-(((4,5-cis-dihydroxy-2-cyclopenten-1-yl)amino)methyl)-7-deazaguanosine). This Rickettsia africae (strain ESF-5) protein is Queuine tRNA-ribosyltransferase.